A 689-amino-acid chain; its full sequence is Transcription factor BHLH42 (689 aa).

2 disordered regions span residues 192–287 (IDHH…NPRV) and 458–489 (DDNN…ANHV). Residues 206–217 (EHSTSNLATSSV) are compositionally biased toward polar residues. The span at 246-271 (EEQEQEQEEDEDDDDDDDDEEEAESD) shows a compositional bias: acidic residues. The interval 483–496 (ELSANHVLAERRRR) is basic motif. The bHLH domain occupies 483–532 (ELSANHVLAERRRREKLNERFIILRSLVPFVTKMDKASILGDTIEYVKQL). Residues 497–532 (EKLNERFIILRSLVPFVTKMDKASILGDTIEYVKQL) form a helix-loop-helix motif region. Residues 547 to 570 (EIDQRSRSSGDPQRSGAKAATDKR) are disordered.

This sequence belongs to the bHLH protein family. As to quaternary structure, interacts with MYB123. As to expression, expressed in the inner pericarp of maturing fruits.

It is found in the nucleus. Its function is as follows. Transcription activator involved in the spatiotemporal regulation of anthocyanin biosynthesis specifically in the inner pericarp of red-fleshed kiwifruits. Functions in association with MYB123 to activate the promoters of LDOX (ANS) and F3GT1 that encode the dedicated enzymes for anthocyanin biosynthesis. The protein is Transcription factor BHLH42 of Actinidia chinensis var. chinensis (Chinese soft-hair kiwi).